The primary structure comprises 138 residues: Small ribosomal subunit protein uS11c (138 aa).

The tract at residues M1–R23 is disordered. Positions G9–R23 are enriched in basic residues.

It belongs to the universal ribosomal protein uS11 family. In terms of assembly, part of the 30S ribosomal subunit.

The protein localises to the plastid. Its subcellular location is the chloroplast. The protein is Small ribosomal subunit protein uS11c of Nasturtium officinale (Watercress).